The sequence spans 209 residues: Chaperone protein TorD (209 aa).

This sequence belongs to the TorD/DmsD family. TorD subfamily.

It localises to the cytoplasm. Involved in the biogenesis of TorA. Acts on TorA before the insertion of the molybdenum cofactor and, as a result, probably favors a conformation of the apoenzyme that is competent for acquiring the cofactor. In Shewanella sp. (strain ANA-3), this protein is Chaperone protein TorD.